We begin with the raw amino-acid sequence, 183 residues long: uncharacterized protein (183 aa).

The next 4 helical transmembrane spans lie at 13 to 35 (KALL…LTYS), 60 to 82 (LLIL…KLRF), 117 to 139 (FEPV…YAIF), and 149 to 171 (LLFY…LYLS).

It is found in the cell membrane. This is an uncharacterized protein from Archaeoglobus fulgidus (strain ATCC 49558 / DSM 4304 / JCM 9628 / NBRC 100126 / VC-16).